We begin with the raw amino-acid sequence, 160 residues long: Peptide methionine sulfoxide reductase MsrA (160 aa).

Residue Cys-11 is part of the active site.

Belongs to the MsrA Met sulfoxide reductase family.

It catalyses the reaction L-methionyl-[protein] + [thioredoxin]-disulfide + H2O = L-methionyl-(S)-S-oxide-[protein] + [thioredoxin]-dithiol. The catalysed reaction is [thioredoxin]-disulfide + L-methionine + H2O = L-methionine (S)-S-oxide + [thioredoxin]-dithiol. In terms of biological role, has an important function as a repair enzyme for proteins that have been inactivated by oxidation. Catalyzes the reversible oxidation-reduction of methionine sulfoxide in proteins to methionine. The chain is Peptide methionine sulfoxide reductase MsrA from Malacoplasma penetrans (strain HF-2) (Mycoplasma penetrans).